The primary structure comprises 177 residues: Adenine phosphoribosyltransferase (177 aa).

The protein belongs to the purine/pyrimidine phosphoribosyltransferase family. In terms of assembly, homodimer.

Its subcellular location is the cytoplasm. The enzyme catalyses AMP + diphosphate = 5-phospho-alpha-D-ribose 1-diphosphate + adenine. The protein operates within purine metabolism; AMP biosynthesis via salvage pathway; AMP from adenine: step 1/1. Its function is as follows. Catalyzes a salvage reaction resulting in the formation of AMP, that is energically less costly than de novo synthesis. This is Adenine phosphoribosyltransferase from Anaeromyxobacter sp. (strain Fw109-5).